The following is a 433-amino-acid chain: Methylenetetrahydrofolate--tRNA-(uracil-5-)-methyltransferase TrmFO (433 aa).

An FAD-binding site is contributed by 8–13 (GAGLAG).

The protein belongs to the MnmG family. TrmFO subfamily. The cofactor is FAD.

The protein localises to the cytoplasm. It carries out the reaction uridine(54) in tRNA + (6R)-5,10-methylene-5,6,7,8-tetrahydrofolate + NADH + H(+) = 5-methyluridine(54) in tRNA + (6S)-5,6,7,8-tetrahydrofolate + NAD(+). It catalyses the reaction uridine(54) in tRNA + (6R)-5,10-methylene-5,6,7,8-tetrahydrofolate + NADPH + H(+) = 5-methyluridine(54) in tRNA + (6S)-5,6,7,8-tetrahydrofolate + NADP(+). In terms of biological role, catalyzes the folate-dependent formation of 5-methyl-uridine at position 54 (M-5-U54) in all tRNAs. In Carboxydothermus hydrogenoformans (strain ATCC BAA-161 / DSM 6008 / Z-2901), this protein is Methylenetetrahydrofolate--tRNA-(uracil-5-)-methyltransferase TrmFO.